The primary structure comprises 1649 residues: DNA-directed RNA polymerase subunit beta' (1649 aa).

Residues C62, C64, C77, and C80 each coordinate Zn(2+). D746, D748, and D750 together coordinate Mg(2+). 4 residues coordinate Zn(2+): C1077, C1268, C1275, and C1278.

The protein belongs to the RNA polymerase beta' chain family. As to quaternary structure, the RNAP catalytic core consists of 2 alpha, 1 beta, 1 beta' and 1 omega subunit. When a sigma factor is associated with the core the holoenzyme is formed, which can initiate transcription. Mg(2+) serves as cofactor. It depends on Zn(2+) as a cofactor.

The enzyme catalyses RNA(n) + a ribonucleoside 5'-triphosphate = RNA(n+1) + diphosphate. Its function is as follows. DNA-dependent RNA polymerase catalyzes the transcription of DNA into RNA using the four ribonucleoside triphosphates as substrates. This Thermosipho africanus (strain TCF52B) protein is DNA-directed RNA polymerase subunit beta'.